The sequence spans 980 residues: MMDVKSISVRVDGTEIQARAGATILDILNENGIEYPQICHVPEVDPIQTCDTCIVEANGKLVRSCATVAENGMSIDLSGNRVKEAQTEAMDRLLENHLLYCTVCDNNNGNCTLHNTAEMMGIEHQKYPYTPKEDPSCAVDMSHPFYRYDPNQCIACGQCVEVCQNLQVNETLSIDWERERPRVIWDEGVPINESSCVSCGQCVTVCPCNALMEKSMLGQAGFMTGIKEDVMEPMIDLVKNVEPGYGSIFAISEVEAAMRETRTKKTKTVCTFCGVGCSFEVWTKGRDILKIQPVSDAPVNAISTCVKGKFGWDFVNSKERITKPLIRKNGAFVESSWEEALDLVASRLGSIKEQYGKGSVGFISSSKITNEENYVIQKLARQVFETNNVDNCSRYCQSPATDGLFRTVGMGGDAGTIKDIAKAGLVIIVGANPAEGHPVLATRVKRAHKLHGQKLIVADLRKNEMAERSDLFISPKQGTDQVWLMAVTKYMIDQGWHDQAFIDENVNYFEDYKETLKTYTLDYAERITGLSKENIIQIAEMIRDADGTCVLWGMGVTQNTGGSDTSAAISNLLLATGNYRRPGAGAYPLRGHNNVQGACDMGTLPGWLPGYQHITDDKARAKFEEAYGVEIDGKPGLDNIQMLHAIEEGKMKAMYLVGEDMALVDSNANHVHDILSSLDFFVVQDIFLSRTAQYADVVLPATPSLEKDGTFTNTERRVQRLYQALPTLGDAKPDWWIIQEVANRLGANWNYSHPSDIFSEMASLSPLFAKASYEVLEGWNSFLWGSFTGESTPLLYEDGFNFPDKKARFALSDWTEPAAFPEEYDLHINNGRMLEHFHEGNMTNKSKGIQAKVPNVFVEISPELAQERGVCDGSLVRLVSPFGAVKLNALITDRVRKNELYLPMNSTDKESAINFLTGPAADKRTNTPAYKQTKVRMEVLGGCETAPLPKTNPRNKKRHPQNGVEAERKWNRPGYVHLTD.

The 2Fe-2S ferredoxin-type domain maps to 5 to 81 (KSISVRVDGT…GMSIDLSGNR (77 aa)). [2Fe-2S] cluster is bound by residues Cys-39, Cys-50, Cys-53, and Cys-65. The 4Fe-4S His(Cys)3-ligated-type domain maps to 81-121 (RVKEAQTEAMDRLLENHLLYCTVCDNNNGNCTLHNTAEMMG). [4Fe-4S] cluster contacts are provided by His-97, Cys-101, Cys-104, Cys-111, Cys-153, Cys-156, Cys-159, Cys-163, Cys-196, Cys-199, Cys-202, Cys-206, Cys-270, Cys-273, Cys-277, and Cys-305. 4Fe-4S ferredoxin-type domains are found at residues 144–171 (PFYR…VNET) and 187–216 (EGVP…EKSM). The formate dehydrogenase stretch occupies residues 258–980 (MRETRTKKTK…NRPGYVHLTD (723 aa)). Residues 263–319 (TKKTKTVCTFCGVGCSFEVWTKGRDILKIQPVSDAPVNAISTCVKGKFGWDFVNSKE) enclose the 4Fe-4S Mo/W bis-MGD-type domain. The disordered stretch occupies residues 944-980 (ETAPLPKTNPRNKKRHPQNGVEAERKWNRPGYVHLTD).

It in the C-terminal section; belongs to the prokaryotic molybdopterin-containing oxidoreductase family. The cofactor is [2Fe-2S] cluster. [4Fe-4S] cluster serves as cofactor. It depends on Mo-bis(molybdopterin guanine dinucleotide) as a cofactor.

The enzyme catalyses formate + NAD(+) = CO2 + NADH. In Bacillus subtilis (strain 168), this protein is Putative formate dehydrogenase YrhE (yrhE).